Here is a 443-residue protein sequence, read N- to C-terminus: Tol-Pal system protein TolB (443 aa).

The first 33 residues, 1 to 33, serve as a signal peptide directing secretion; that stretch reads MKIGIINTKIRTVFSAFACMIAASLVCTMPARA.

The protein belongs to the TolB family. As to quaternary structure, the Tol-Pal system is composed of five core proteins: the inner membrane proteins TolA, TolQ and TolR, the periplasmic protein TolB and the outer membrane protein Pal. They form a network linking the inner and outer membranes and the peptidoglycan layer.

It localises to the periplasm. In terms of biological role, part of the Tol-Pal system, which plays a role in outer membrane invagination during cell division and is important for maintaining outer membrane integrity. The chain is Tol-Pal system protein TolB from Brucella abortus (strain S19).